We begin with the raw amino-acid sequence, 88 residues long: Small ribosomal subunit protein bS20 (88 aa).

Basic and acidic residues predominate over residues Met1–Arg23. Residues Met1–Lys29 are disordered.

It belongs to the bacterial ribosomal protein bS20 family.

Its function is as follows. Binds directly to 16S ribosomal RNA. This Dehalococcoides mccartyi (strain ATCC BAA-2100 / JCM 16839 / KCTC 5957 / BAV1) protein is Small ribosomal subunit protein bS20.